Reading from the N-terminus, the 54-residue chain is Large ribosomal subunit protein bL33A (54 aa).

Belongs to the bacterial ribosomal protein bL33 family.

This chain is Large ribosomal subunit protein bL33A, found in Mycolicibacterium gilvum (strain PYR-GCK) (Mycobacterium gilvum (strain PYR-GCK)).